The primary structure comprises 407 residues: Arginine deiminase (407 aa).

The active-site Amidino-cysteine intermediate is Cys397.

It belongs to the arginine deiminase family.

It is found in the cytoplasm. It carries out the reaction L-arginine + H2O = L-citrulline + NH4(+). It functions in the pathway amino-acid degradation; L-arginine degradation via ADI pathway; carbamoyl phosphate from L-arginine: step 1/2. The protein is Arginine deiminase of Vibrio parahaemolyticus serotype O3:K6 (strain RIMD 2210633).